The chain runs to 315 residues: 4-hydroxy-3-methylbut-2-enyl diphosphate reductase (315 aa).

A [4Fe-4S] cluster-binding site is contributed by Cys12. Residues His43 and His81 each coordinate (2E)-4-hydroxy-3-methylbut-2-enyl diphosphate. Positions 43 and 81 each coordinate dimethylallyl diphosphate. Residues His43 and His81 each coordinate isopentenyl diphosphate. Position 103 (Cys103) interacts with [4Fe-4S] cluster. Residue His131 participates in (2E)-4-hydroxy-3-methylbut-2-enyl diphosphate binding. A dimethylallyl diphosphate-binding site is contributed by His131. His131 contacts isopentenyl diphosphate. Glu133 serves as the catalytic Proton donor. A (2E)-4-hydroxy-3-methylbut-2-enyl diphosphate-binding site is contributed by Thr170. A [4Fe-4S] cluster-binding site is contributed by Cys198. (2E)-4-hydroxy-3-methylbut-2-enyl diphosphate is bound by residues Ser226, Asn228, and Ser271. Ser226, Asn228, and Ser271 together coordinate dimethylallyl diphosphate. Residues Ser226, Asn228, and Ser271 each contribute to the isopentenyl diphosphate site.

Belongs to the IspH family. Requires [4Fe-4S] cluster as cofactor.

The enzyme catalyses isopentenyl diphosphate + 2 oxidized [2Fe-2S]-[ferredoxin] + H2O = (2E)-4-hydroxy-3-methylbut-2-enyl diphosphate + 2 reduced [2Fe-2S]-[ferredoxin] + 2 H(+). It carries out the reaction dimethylallyl diphosphate + 2 oxidized [2Fe-2S]-[ferredoxin] + H2O = (2E)-4-hydroxy-3-methylbut-2-enyl diphosphate + 2 reduced [2Fe-2S]-[ferredoxin] + 2 H(+). The protein operates within isoprenoid biosynthesis; dimethylallyl diphosphate biosynthesis; dimethylallyl diphosphate from (2E)-4-hydroxy-3-methylbutenyl diphosphate: step 1/1. It functions in the pathway isoprenoid biosynthesis; isopentenyl diphosphate biosynthesis via DXP pathway; isopentenyl diphosphate from 1-deoxy-D-xylulose 5-phosphate: step 6/6. Catalyzes the conversion of 1-hydroxy-2-methyl-2-(E)-butenyl 4-diphosphate (HMBPP) into a mixture of isopentenyl diphosphate (IPP) and dimethylallyl diphosphate (DMAPP). Acts in the terminal step of the DOXP/MEP pathway for isoprenoid precursor biosynthesis. This Anoxybacillus flavithermus (strain DSM 21510 / WK1) protein is 4-hydroxy-3-methylbut-2-enyl diphosphate reductase.